Here is a 534-residue protein sequence, read N- to C-terminus: Cytochalasin cluster regulator ccsR (534 aa).

Positions 13-54 (CDRCRRQKLRCVRPLKHGACEHPNNIEALEPCERCSRAGTPC) form a DNA-binding region, zn(2)-C6 fungal-type. 2 disordered regions span residues 88–170 (IPKQ…LDAP) and 350–378 (TSAR…SAAS). Over residues 109–125 (TGQNKGINDANAVTGSL) the composition is skewed to polar residues. Basic and acidic residues predominate over residues 130 to 146 (PDHRSGSNVHRQPEARP). Residues 361 to 378 (DMCASSSNRDSSDLSAAS) show a composition bias toward low complexity.

It localises to the nucleus. Functionally, transcription factor involved in regulation of gene cluster that mediates the biosynthesis of the mycotoxins cytochalasins E and K. The chain is Cytochalasin cluster regulator ccsR from Aspergillus clavatus (strain ATCC 1007 / CBS 513.65 / DSM 816 / NCTC 3887 / NRRL 1 / QM 1276 / 107).